The sequence spans 582 residues: Probable DNA ligase (582 aa).

Glutamate 243 contributes to the ATP binding site. Lysine 245 functions as the N6-AMP-lysine intermediate in the catalytic mechanism. ATP-binding residues include arginine 250, arginine 265, glutamate 295, phenylalanine 335, arginine 410, and lysine 416.

It belongs to the ATP-dependent DNA ligase family. It depends on Mg(2+) as a cofactor.

The enzyme catalyses ATP + (deoxyribonucleotide)n-3'-hydroxyl + 5'-phospho-(deoxyribonucleotide)m = (deoxyribonucleotide)n+m + AMP + diphosphate.. DNA ligase that seals nicks in double-stranded DNA during DNA replication, DNA recombination and DNA repair. The chain is Probable DNA ligase from Dictyoglomus thermophilum (strain ATCC 35947 / DSM 3960 / H-6-12).